The primary structure comprises 106 residues: uncharacterized protein (106 aa).

3 helical membrane-spanning segments follow: residues 5–27, 42–64, and 76–98; these read IFVI…GIII, AVAA…LAYM, and LPYI…TNFF.

The protein localises to the cell membrane. This is an uncharacterized protein from Archaeoglobus fulgidus (strain ATCC 49558 / DSM 4304 / JCM 9628 / NBRC 100126 / VC-16).